We begin with the raw amino-acid sequence, 759 residues long: Protein YdeP (759 aa).

[4Fe-4S] cluster-binding residues include Cys-49 and Cys-52.

It belongs to the prokaryotic molybdopterin-containing oxidoreductase family. Requires [4Fe-4S] cluster as cofactor. Mo-bis(molybdopterin guanine dinucleotide) is required as a cofactor.

Functionally, probably involved in acid resistance. This chain is Protein YdeP (ydeP), found in Escherichia coli (strain K12).